Consider the following 399-residue polypeptide: Tyrosine--tRNA ligase (399 aa).

Tyr36 is a binding site for L-tyrosine. Residues 41–50 carry the 'HIGH' region motif; sequence PTAPSLHIGN. L-tyrosine is bound by residues Tyr166 and Gln170. Positions 226–230 match the 'KMSKS' region motif; the sequence is KMGKS. Lys229 contributes to the ATP binding site. In terms of domain architecture, S4 RNA-binding spans 332 to 395; sequence TRLVDVIVDL…KKRFVTVQVI (64 aa).

Belongs to the class-I aminoacyl-tRNA synthetase family. TyrS type 1 subfamily. In terms of assembly, homodimer.

It localises to the cytoplasm. It carries out the reaction tRNA(Tyr) + L-tyrosine + ATP = L-tyrosyl-tRNA(Tyr) + AMP + diphosphate + H(+). Catalyzes the attachment of tyrosine to tRNA(Tyr) in a two-step reaction: tyrosine is first activated by ATP to form Tyr-AMP and then transferred to the acceptor end of tRNA(Tyr). The sequence is that of Tyrosine--tRNA ligase from Mycoplasma pneumoniae (strain ATCC 29342 / M129 / Subtype 1) (Mycoplasmoides pneumoniae).